The sequence spans 128 residues: Large ribosomal subunit protein bL12 (128 aa).

It belongs to the bacterial ribosomal protein bL12 family. Homodimer. Part of the ribosomal stalk of the 50S ribosomal subunit. Forms a multimeric L10(L12)X complex, where L10 forms an elongated spine to which 2 to 4 L12 dimers bind in a sequential fashion. Binds GTP-bound translation factors.

Its function is as follows. Forms part of the ribosomal stalk which helps the ribosome interact with GTP-bound translation factors. Is thus essential for accurate translation. This Kineococcus radiotolerans (strain ATCC BAA-149 / DSM 14245 / SRS30216) protein is Large ribosomal subunit protein bL12.